The chain runs to 501 residues: 5-beta-cholestane-3-alpha,7-alpha-diol 12-alpha-hydroxylase (501 aa).

Residues 1–21 (MVLWGPVLGVLLVAIVGYLCL) form a helical membrane-spanning segment. A Phosphoserine modification is found at Ser-326. Cys-440 serves as a coordination point for heme.

It belongs to the cytochrome P450 family. Heme is required as a cofactor.

It localises to the endoplasmic reticulum membrane. The protein localises to the microsome membrane. It catalyses the reaction 7alpha-hydroxycholest-4-en-3-one + reduced [NADPH--hemoprotein reductase] + O2 = 7alpha,12alpha-dihydroxycholest-4-en-3-one + oxidized [NADPH--hemoprotein reductase] + H2O + H(+). The enzyme catalyses 5beta-cholestane-3alpha,7alpha-diol + reduced [NADPH--hemoprotein reductase] + O2 = 5beta-cholestane-3alpha,7alpha,12alpha-triol + oxidized [NADPH--hemoprotein reductase] + H2O + H(+). It carries out the reaction chenodeoxycholate + reduced [NADPH--hemoprotein reductase] + O2 = cholate + oxidized [NADPH--hemoprotein reductase] + H2O + H(+). It participates in lipid metabolism; bile acid biosynthesis. Its function is as follows. A cytochrome P450 monooxygenase involved in primary bile acid biosynthesis. Catalyzes the 12alpha-hydroxylation of 7alpha-hydroxy-4-cholesten-3-one, an intermediate metabolite in cholic acid biosynthesis. Controls biliary balance of cholic acid and chenodeoxycholic acid, ultimately regulating the intestinal absorption of dietary lipids. Mechanistically, uses molecular oxygen inserting one oxygen atom into a substrate, and reducing the second into a water molecule, with two electrons provided by NADPH via cytochrome P450 reductase (CPR; NADPH--hemoprotein reductase). The sequence is that of 5-beta-cholestane-3-alpha,7-alpha-diol 12-alpha-hydroxylase (CYP8B1) from Sus scrofa (Pig).